A 507-amino-acid polypeptide reads, in one-letter code: Putative propionyl-CoA carboxylase beta chain (507 aa).

Basic and acidic residues predominate over residues 1-25 (MNEHMDHFYTKRKQAEEGGGREKLA). Residues 1 to 30 (MNEHMDHFYTKRKQAEEGGGREKLAQQRQK) form a disordered region. The region spanning 1–254 (MNEHMDHFYT…NGRTTEPKPE (254 aa)) is the CoA carboxyltransferase N-terminal domain. The carboxyltransferase stretch occupies residues 1 to 501 (MNEHMDHFYT…HKTEERPKKK (501 aa)). One can recognise a CoA carboxyltransferase C-terminal domain in the interval 256-501 (EASRPLLNRL…HKTEERPKKK (246 aa)).

The protein belongs to the AccD/PCCB family. In terms of assembly, probably a dodecamer composed of six biotin-containing alpha subunits and six beta subunits.

The catalysed reaction is propanoyl-CoA + hydrogencarbonate + ATP = (S)-methylmalonyl-CoA + ADP + phosphate + H(+). Its pathway is metabolic intermediate metabolism; propanoyl-CoA degradation; succinyl-CoA from propanoyl-CoA: step 1/3. This chain is Putative propionyl-CoA carboxylase beta chain (yqjD), found in Bacillus subtilis (strain 168).